The primary structure comprises 199 residues: Acireductone dioxygenase 1 (199 aa).

4 residues coordinate Fe(2+): His99, His101, Glu105, and His144. His99, His101, Glu105, and His144 together coordinate Ni(2+).

Belongs to the acireductone dioxygenase (ARD) family. Fe(2+) serves as cofactor. Ni(2+) is required as a cofactor.

Its subcellular location is the cytoplasm. The protein resides in the nucleus. The catalysed reaction is 1,2-dihydroxy-5-(methylsulfanyl)pent-1-en-3-one + O2 = 4-methylsulfanyl-2-oxobutanoate + formate + 2 H(+). It carries out the reaction 1,2-dihydroxy-5-(methylsulfanyl)pent-1-en-3-one + O2 = 3-(methylsulfanyl)propanoate + CO + formate + 2 H(+). It participates in amino-acid biosynthesis; L-methionine biosynthesis via salvage pathway; L-methionine from S-methyl-5-thio-alpha-D-ribose 1-phosphate: step 5/6. Its function is as follows. Catalyzes 2 different reactions between oxygen and the acireductone 1,2-dihydroxy-3-keto-5-methylthiopentene (DHK-MTPene) depending upon the metal bound in the active site. Fe-containing acireductone dioxygenase (Fe-ARD) produces formate and 2-keto-4-methylthiobutyrate (KMTB), the alpha-ketoacid precursor of methionine in the methionine recycle pathway. Ni-containing acireductone dioxygenase (Ni-ARD) produces methylthiopropionate, carbon monoxide and formate, and does not lie on the methionine recycle pathway. The protein is Acireductone dioxygenase 1 (ARD1) of Arabidopsis thaliana (Mouse-ear cress).